Here is a 289-residue protein sequence, read N- to C-terminus: Ribosomal protein L11 methyltransferase (289 aa).

Positions 142, 163, 185, and 226 each coordinate S-adenosyl-L-methionine.

Belongs to the methyltransferase superfamily. PrmA family.

The protein localises to the cytoplasm. It catalyses the reaction L-lysyl-[protein] + 3 S-adenosyl-L-methionine = N(6),N(6),N(6)-trimethyl-L-lysyl-[protein] + 3 S-adenosyl-L-homocysteine + 3 H(+). In terms of biological role, methylates ribosomal protein L11. In Legionella pneumophila (strain Corby), this protein is Ribosomal protein L11 methyltransferase.